A 431-amino-acid polypeptide reads, in one-letter code: Galanin-like G-protein coupled receptor npr-9 (431 aa).

The Extracellular portion of the chain corresponds to Met-1–Thr-34. Asn-5 carries an N-linked (GlcNAc...) asparagine glycan. A helical transmembrane segment spans residues Ile-35 to Phe-55. Topologically, residues Gly-56–Leu-66 are cytoplasmic. The chain crosses the membrane as a helical span at residues Ile-67–Val-87. Topologically, residues Asp-88–Cys-101 are extracellular. Cys-101 and Cys-182 form a disulfide bridge. Residues Ser-102–Leu-124 traverse the membrane as a helical segment. Topologically, residues Asp-125–Arg-143 are cytoplasmic. Residues Asn-144 to Gly-164 form a helical membrane-spanning segment. At Arg-165–Thr-203 the chain is on the extracellular side. The chain crosses the membrane as a helical span at residues Phe-204–Leu-224. Residues Arg-225–Arg-268 lie on the Cytoplasmic side of the membrane. Residues Asn-235–Ser-252 are compositionally biased toward polar residues. Positions Asn-235–Pro-257 are disordered. A helical transmembrane segment spans residues Leu-269–Phe-289. Residues Met-290 to Pro-298 are Extracellular-facing. Residues Leu-299–Tyr-319 form a helical membrane-spanning segment. Over Thr-320–Leu-431 the chain is Cytoplasmic. A compositionally biased stretch (polar residues) spans Ser-393–Ala-414. Residues Ser-393–Leu-431 are disordered. The span at Lys-415–Ser-425 shows a compositional bias: basic residues.

This sequence belongs to the G-protein coupled receptor 1 family. In terms of tissue distribution, exclusively expressed in the AIB interneuron.

It localises to the cell membrane. Its function is as follows. Neuropeptide that controls movement such as roaming, foraging and backwards locomotion or 'reversals' in response to environmental cues such as food availability or volatile odorants such as octanol. Antagonizes AIB interneuron activity to control bacterial colonization and may negatively regulate the expression of immunity-related genes such as pqm-1 and dod-22 in response to infection by P.aeruginosa. The polypeptide is Galanin-like G-protein coupled receptor npr-9 (Caenorhabditis elegans).